The following is a 231-amino-acid chain: Hypoxanthine-guanine-xanthine phosphoribosyltransferase (231 aa).

GMP is bound by residues Lys-77, 144–152, Lys-176, and Asp-204; that span reads EDIIDTGKT. The Proton acceptor role is filled by Asp-148. Asp-204 is a Mg(2+) binding site.

It belongs to the purine/pyrimidine phosphoribosyltransferase family. In terms of assembly, homotetramer. It depends on Mg(2+) as a cofactor.

It localises to the cytoplasm. It catalyses the reaction IMP + diphosphate = hypoxanthine + 5-phospho-alpha-D-ribose 1-diphosphate. It carries out the reaction GMP + diphosphate = guanine + 5-phospho-alpha-D-ribose 1-diphosphate. The catalysed reaction is XMP + diphosphate = xanthine + 5-phospho-alpha-D-ribose 1-diphosphate. It participates in purine metabolism; GMP biosynthesis via salvage pathway; GMP from guanine: step 1/1. Its pathway is purine metabolism; IMP biosynthesis via salvage pathway; IMP from hypoxanthine: step 1/1. The protein operates within purine metabolism; XMP biosynthesis via salvage pathway; XMP from xanthine: step 1/1. Functionally, catalyzes the transfer of a ribosyl phosphate group from 5-phosphoribose 1-diphosphate to the N(9) of hypoxanthine, guanine or xanthine, leading to IMP, GMP and XMP, respectively. Plays a central role in the generation of purine nucleotides through the purine salvage pathway. This Plasmodium falciparum (isolate K1 / Thailand) protein is Hypoxanthine-guanine-xanthine phosphoribosyltransferase (LACZ).